Here is a 96-residue protein sequence, read N- to C-terminus: Beta-defensin 20 (96 aa).

Positions 1-21 (MKLLQVLLVLLFVALADGAQP) are cleaved as a signal peptide. Cystine bridges form between C24–C52, C32–C46, and C36–C53.

Belongs to the beta-defensin family.

Its subcellular location is the secreted. Its function is as follows. Has antibacterial activity. This Mus musculus (Mouse) protein is Beta-defensin 20 (Defb20).